The sequence spans 166 residues: NAD(P)H-quinone oxidoreductase subunit I, chloroplastic (166 aa).

4Fe-4S ferredoxin-type domains lie at 55-84 (GRIHFEFDKCIACEVCVRVCPIDLPVVDWK) and 95-124 (LNYSIDFGICIFCGNCVEYCPTNCLSMTEE). Residues Cys64, Cys67, Cys70, Cys74, Cys104, Cys107, Cys110, and Cys114 each coordinate [4Fe-4S] cluster.

Belongs to the complex I 23 kDa subunit family. NDH is composed of at least 16 different subunits, 5 of which are encoded in the nucleus. [4Fe-4S] cluster is required as a cofactor.

It is found in the plastid. Its subcellular location is the chloroplast thylakoid membrane. It carries out the reaction a plastoquinone + NADH + (n+1) H(+)(in) = a plastoquinol + NAD(+) + n H(+)(out). The catalysed reaction is a plastoquinone + NADPH + (n+1) H(+)(in) = a plastoquinol + NADP(+) + n H(+)(out). Its function is as follows. NDH shuttles electrons from NAD(P)H:plastoquinone, via FMN and iron-sulfur (Fe-S) centers, to quinones in the photosynthetic chain and possibly in a chloroplast respiratory chain. The immediate electron acceptor for the enzyme in this species is believed to be plastoquinone. Couples the redox reaction to proton translocation, and thus conserves the redox energy in a proton gradient. In Acanthospermum australe (Paraguayan starburr), this protein is NAD(P)H-quinone oxidoreductase subunit I, chloroplastic.